The chain runs to 362 residues: E3 ubiquitin-protein ligase TM129 (362 aa).

The Lumenal segment spans residues methionine 1–valine 6. A helical transmembrane segment spans residues threonine 7 to histidine 27. The Cytoplasmic portion of the chain corresponds to serine 28–serine 56. The helical transmembrane segment at threonine 57–alanine 77 threads the bilayer. The Lumenal segment spans residues alanine 78–lysine 94. The helical transmembrane segment at valine 95 to serine 115 threads the bilayer. The Cytoplasmic segment spans residues glutamine 116–arginine 362. Residues cysteine 285–arginine 350 form an RING-type; degenerate zinc finger.

This sequence belongs to the TMEM129 family. As to quaternary structure, integral component of ER-resident dislocation complexes.

The protein resides in the endoplasmic reticulum membrane. The enzyme catalyses S-ubiquitinyl-[E2 ubiquitin-conjugating enzyme]-L-cysteine + [acceptor protein]-L-lysine = [E2 ubiquitin-conjugating enzyme]-L-cysteine + N(6)-ubiquitinyl-[acceptor protein]-L-lysine.. The protein operates within protein modification; protein ubiquitination. Its function is as follows. E3 ubiquitin-protein ligase involved in ER-associated protein degradation, preferentially associates with the E2 enzyme UBE2J2. This Xenopus tropicalis (Western clawed frog) protein is E3 ubiquitin-protein ligase TM129 (tmem129).